Reading from the N-terminus, the 232-residue chain is GFP-like non-fluorescent chromoprotein FP595 (232 aa).

The segment at residues Met-63–Gly-65 is a cross-link (2-iminomethyl-5-imidazolinone (Met-Gly)). Tyr-64 carries the post-translational modification (E)-2,3-didehydrotyrosine.

This sequence belongs to the GFP family. Contains a chromophore consisting of modified amino acid residues. The chromophore is formed by autocatalytic backbone condensation between Xaa-N and Gly-(N+2), oxidation of Tyr-(N+1) to didehydrotyrosine, and formation of a double bond to the alpha-amino nitrogen of residue Tyr-(N+1). Maturation of the chromophore requires nothing other than molecular oxygen. In terms of tissue distribution, tentacle tips.

Functionally, pigment protein that is intensely purple in color. This is GFP-like non-fluorescent chromoprotein FP595 from Anemonia sulcata (Mediterranean snakelocks sea anemone).